The following is a 186-amino-acid chain: dCTP deaminase (186 aa).

107–112 (KSSYAR) contacts dCTP. Glutamate 133 serves as the catalytic Proton donor/acceptor. Residues glutamine 152, tyrosine 166, and glutamine 176 each coordinate dCTP.

It belongs to the dCTP deaminase family. Homotrimer.

It catalyses the reaction dCTP + H2O + H(+) = dUTP + NH4(+). Its pathway is pyrimidine metabolism; dUMP biosynthesis; dUMP from dCTP (dUTP route): step 1/2. Functionally, catalyzes the deamination of dCTP to dUTP. In Chloroflexus aurantiacus (strain ATCC 29366 / DSM 635 / J-10-fl), this protein is dCTP deaminase.